Here is a 316-residue protein sequence, read N- to C-terminus: MGRPPCCDKIGVKKGPWTPEEDIILVSYIQEHGPGNWRAIPSNTGLLRCSKSCRLRWTNYLRPGIKRGDFTEHEEKMIIHLQALLGNRWAAIASYLPHRTDNDIKNYWNTHLKKKLEKLQSPENGKCQDGNSSVDSDKSVSKGQWERRLQTDIHMAKQALCDALSLDKTSSSTDDPKLSTVQTTQPRPFQASTYSSAENIARLLENWKKKSPVNASSTSQAGSSESTTTSFNYPSVCLSTSSPSEGAISTNFISFNSSNSDILEDHDQAKFEAATNGVNFQDESKPILDNQMPLSLLEKWLLDDSAAVAQGQDVDF.

HTH myb-type domains are found at residues 9 to 65 (KIGV…RPGI) and 66 to 116 (KRGD…KKKL). DNA-binding regions (H-T-H motif) lie at residues 37–61 (WRAIPSNTGLLRCSKSCRLRWTNYL) and 89–112 (WAAIASYLPHRTDNDIKNYWNTHL). Disordered stretches follow at residues 119 to 144 (LQSPENGKCQDGNSSVDSDKSVSKGQ), 168 to 193 (KTSSSTDDPKLSTVQTTQPRPFQAST), and 209 to 230 (KKSPVNASSTSQAGSSESTTTS). The segment covering 135–144 (DSDKSVSKGQ) has biased composition (basic and acidic residues). Polar residues predominate over residues 181–193 (VQTTQPRPFQAST). Residues 216-230 (SSTSQAGSSESTTTS) show a composition bias toward low complexity.

Expressed in flowers, leaves and weakly in seed pods.

The protein resides in the nucleus. Transcription factor. This chain is Myb-related protein 306, found in Antirrhinum majus (Garden snapdragon).